The sequence spans 330 residues: 4-hydroxythreonine-4-phosphate dehydrogenase (330 aa).

Threonine 133 is a binding site for substrate. 3 residues coordinate a divalent metal cation: histidine 161, histidine 206, and histidine 261. Substrate is bound by residues lysine 269, asparagine 278, and arginine 287.

The protein belongs to the PdxA family. Homodimer. Requires Zn(2+) as cofactor. Mg(2+) is required as a cofactor. Co(2+) serves as cofactor.

It is found in the cytoplasm. The enzyme catalyses 4-(phosphooxy)-L-threonine + NAD(+) = 3-amino-2-oxopropyl phosphate + CO2 + NADH. It participates in cofactor biosynthesis; pyridoxine 5'-phosphate biosynthesis; pyridoxine 5'-phosphate from D-erythrose 4-phosphate: step 4/5. Catalyzes the NAD(P)-dependent oxidation of 4-(phosphooxy)-L-threonine (HTP) into 2-amino-3-oxo-4-(phosphooxy)butyric acid which spontaneously decarboxylates to form 3-amino-2-oxopropyl phosphate (AHAP). This chain is 4-hydroxythreonine-4-phosphate dehydrogenase, found in Xylella fastidiosa (strain Temecula1 / ATCC 700964).